The primary structure comprises 540 residues: Phosphoenolpyruvate carboxykinase (ATP) (540 aa).

Arg-65 contacts substrate. At Lys-87 the chain carries N6-acetyllysine. The substrate site is built by Tyr-207 and Lys-213. Residues Lys-213, His-232, and 248 to 256 (GLSGTGKTT) each bind ATP. Mn(2+) is bound by residues Lys-213 and His-232. Asp-269 is a Mn(2+) binding site. ATP contacts are provided by residues Glu-297, Arg-333, 449–450 (RI), and Thr-455. Residue Arg-333 coordinates substrate. Residue Lys-523 is modified to N6-acetyllysine.

Belongs to the phosphoenolpyruvate carboxykinase (ATP) family. As to quaternary structure, monomer. It depends on Mn(2+) as a cofactor.

The protein localises to the cytoplasm. It carries out the reaction oxaloacetate + ATP = phosphoenolpyruvate + ADP + CO2. Its pathway is carbohydrate biosynthesis; gluconeogenesis. Involved in the gluconeogenesis. Catalyzes the conversion of oxaloacetate (OAA) to phosphoenolpyruvate (PEP) through direct phosphoryl transfer between the nucleoside triphosphate and OAA. The chain is Phosphoenolpyruvate carboxykinase (ATP) from Shigella flexneri serotype 5b (strain 8401).